A 450-amino-acid chain; its full sequence is 23S rRNA (uracil(1939)-C(5))-methyltransferase RlmD (450 aa).

Positions 15 to 73 (KAVPAKNLTVTVASLDPFGQGVARHEGKTVFVTGVLPGEQAEVQLTEEKRQFSHAKLKR) constitute a TRAM domain. Positions 86, 92, 95, and 173 each coordinate [4Fe-4S] cluster. Residues glutamine 276, phenylalanine 305, asparagine 310, glutamate 326, asparagine 353, and aspartate 374 each coordinate S-adenosyl-L-methionine. Catalysis depends on cysteine 400, which acts as the Nucleophile.

Belongs to the class I-like SAM-binding methyltransferase superfamily. RNA M5U methyltransferase family. RlmD subfamily.

The catalysed reaction is uridine(1939) in 23S rRNA + S-adenosyl-L-methionine = 5-methyluridine(1939) in 23S rRNA + S-adenosyl-L-homocysteine + H(+). In terms of biological role, catalyzes the formation of 5-methyl-uridine at position 1939 (m5U1939) in 23S rRNA. The chain is 23S rRNA (uracil(1939)-C(5))-methyltransferase RlmD from Pectobacterium atrosepticum (strain SCRI 1043 / ATCC BAA-672) (Erwinia carotovora subsp. atroseptica).